A 216-amino-acid polypeptide reads, in one-letter code: UPF0301 protein BBta_6966 (216 aa).

Belongs to the UPF0301 (AlgH) family.

This is UPF0301 protein BBta_6966 from Bradyrhizobium sp. (strain BTAi1 / ATCC BAA-1182).